A 393-amino-acid chain; its full sequence is COP9 signalosome complex subunit 4 (393 aa).

The 166-residue stretch at 197 to 362 folds into the PCI domain; the sequence is MFLKASLRYY…RLIQFENVGD (166 aa).

Belongs to the CSN4 family. As to quaternary structure, component of the CSN complex. The holocomplex is comprised of 8 subunits csn1-8. In the complex, it probably interacts directly with csn1, csn2, csn3, csn4, csn6 and csn8.

It is found in the cytoplasm. The protein localises to the nucleus. Functionally, component of the COP9 signalosome complex (CSN), a complex involved in various cellular and developmental processes. The CSN complex is an essential regulator of the ubiquitin (Ubl) conjugation pathway by mediating the deneddylation of the cullin subunits of E3 ligase complexes, leading to modify the Ubl ligase activity. The sequence is that of COP9 signalosome complex subunit 4 (csn4) from Dictyostelium discoideum (Social amoeba).